The primary structure comprises 351 residues: Ion-translocating oxidoreductase complex subunit D (351 aa).

A run of 4 helical transmembrane segments spans residues 18–38, 40–60, 87–107, and 121–141; these read IMLL…YFFG, GSLI…GAVL, LPPL…IVIA, and PAMV…TSWL. FMN phosphoryl threonine is present on Thr185. 5 helical membrane passes run 211–231, 241–261, 264–284, 298–318, and 320–340; these read VLAG…GLLL, IPVS…MIAP, FASP…FFIA, LIFG…GGYP, and GVAF…HYTQ.

The protein belongs to the NqrB/RnfD family. As to quaternary structure, the complex is composed of six subunits: RnfA, RnfB, RnfC, RnfD, RnfE and RnfG. FMN is required as a cofactor.

The protein resides in the cell inner membrane. Part of a membrane-bound complex that couples electron transfer with translocation of ions across the membrane. The sequence is that of Ion-translocating oxidoreductase complex subunit D from Yersinia pseudotuberculosis serotype I (strain IP32953).